The primary structure comprises 359 residues: Peptide chain release factor 1 (359 aa).

Glutamine 233 is modified (N5-methylglutamine).

This sequence belongs to the prokaryotic/mitochondrial release factor family. Post-translationally, methylated by PrmC. Methylation increases the termination efficiency of RF1.

The protein localises to the cytoplasm. Peptide chain release factor 1 directs the termination of translation in response to the peptide chain termination codons UAG and UAA. The protein is Peptide chain release factor 1 of Cytophaga hutchinsonii (strain ATCC 33406 / DSM 1761 / CIP 103989 / NBRC 15051 / NCIMB 9469 / D465).